We begin with the raw amino-acid sequence, 159 residues long: NADH-quinone oxidoreductase subunit B (159 aa).

Residues Cys-36, Cys-37, Cys-102, and Cys-132 each coordinate [4Fe-4S] cluster.

This sequence belongs to the complex I 20 kDa subunit family. In terms of assembly, NDH-1 is composed of 14 different subunits. Subunits NuoB, C, D, E, F, and G constitute the peripheral sector of the complex. It depends on [4Fe-4S] cluster as a cofactor.

Its subcellular location is the cell inner membrane. It catalyses the reaction a quinone + NADH + 5 H(+)(in) = a quinol + NAD(+) + 4 H(+)(out). NDH-1 shuttles electrons from NADH, via FMN and iron-sulfur (Fe-S) centers, to quinones in the respiratory chain. Couples the redox reaction to proton translocation (for every two electrons transferred, four hydrogen ions are translocated across the cytoplasmic membrane), and thus conserves the redox energy in a proton gradient. The protein is NADH-quinone oxidoreductase subunit B of Paracidovorax citrulli (strain AAC00-1) (Acidovorax citrulli).